The sequence spans 488 residues: Glutamyl-tRNA(Gln) amidotransferase subunit A (488 aa).

Residues lysine 77 and serine 152 each act as charge relay system in the active site. Serine 176 (acyl-ester intermediate) is an active-site residue.

It belongs to the amidase family. GatA subfamily. Heterotrimer of A, B and C subunits.

The enzyme catalyses L-glutamyl-tRNA(Gln) + L-glutamine + ATP + H2O = L-glutaminyl-tRNA(Gln) + L-glutamate + ADP + phosphate + H(+). Its function is as follows. Allows the formation of correctly charged Gln-tRNA(Gln) through the transamidation of misacylated Glu-tRNA(Gln) in organisms which lack glutaminyl-tRNA synthetase. The reaction takes place in the presence of glutamine and ATP through an activated gamma-phospho-Glu-tRNA(Gln). This is Glutamyl-tRNA(Gln) amidotransferase subunit A from Streptococcus equi subsp. zooepidemicus (strain MGCS10565).